The primary structure comprises 395 residues: ATP phosphoribosyltransferase regulatory subunit (395 aa).

The protein belongs to the class-II aminoacyl-tRNA synthetase family. HisZ subfamily. Heteromultimer composed of HisG and HisZ subunits.

It is found in the cytoplasm. Its pathway is amino-acid biosynthesis; L-histidine biosynthesis; L-histidine from 5-phospho-alpha-D-ribose 1-diphosphate: step 1/9. Functionally, required for the first step of histidine biosynthesis. May allow the feedback regulation of ATP phosphoribosyltransferase activity by histidine. This is ATP phosphoribosyltransferase regulatory subunit from Pseudomonas putida (strain ATCC 700007 / DSM 6899 / JCM 31910 / BCRC 17059 / LMG 24140 / F1).